Reading from the N-terminus, the 37-residue chain is Cytochrome b6-f complex subunit 5 (37 aa).

A helical transmembrane segment spans residues 5-25 (LLSGIVLGMIPITLAGLFVTA).

Belongs to the PetG family. The 4 large subunits of the cytochrome b6-f complex are cytochrome b6, subunit IV (17 kDa polypeptide, PetD), cytochrome f and the Rieske protein, while the 4 small subunits are PetG, PetL, PetM and PetN. The complex functions as a dimer.

It is found in the plastid. Its subcellular location is the chloroplast thylakoid membrane. Its function is as follows. Component of the cytochrome b6-f complex, which mediates electron transfer between photosystem II (PSII) and photosystem I (PSI), cyclic electron flow around PSI, and state transitions. PetG is required for either the stability or assembly of the cytochrome b6-f complex. This Mesostigma viride (Green alga) protein is Cytochrome b6-f complex subunit 5.